The following is a 945-amino-acid chain: Cysteine-rich, acidic integral membrane protein (945 aa).

Positions 1-20 (MGNEAGPIFEESNAEVGTPP) are disordered. The signal sequence occupies residues 1-23 (MGNEAGPIFEESNAEVGTPPADA). The Extracellular portion of the chain corresponds to 24–882 (VHDDFFFDYK…GKGSSVSAGL (859 aa)). Asn-34 and Asn-43 each carry an N-linked (GlcNAc...) asparagine glycan. 66 consecutive repeat copies span residues 40–51 (DDCNITGDCNET), 52–63 (DDCDITGDCNET), 64–75 (DDCNITGDCNET), 76–87 (DDCNITGDCNET), 88–99 (DDCNITGDCNET), 100–111 (DDCNITGDCNET), 112–123 (DDCDITGDCNET), 124–135 (DDCNITGDCNET), 136–147 (DDCNITGDCNET), 148–159 (DDCNITGDCNET), 160–171 (DDCDITGDCNET), 172–183 (DDCNITGDCNET), 184–195 (DDCDITGDCNET), 196–207 (DDCNITGDCNET), 208–219 (DDCNITGDCNET), 220–231 (DDCNITGDCNET), 232–243 (DDCNITGDCNET), 244–255 (DDCNITGDCNET), 256–267 (DDCNITGDCNET), 268–279 (DDCDITGDCNET), 280–291 (DDCNITGDCNET), 292–303 (DDCNITGDCNET), 304–315 (DDCNITGDCNET), 316–327 (DDCNITGDCNET), 328–339 (DDCNITGDCNET), 340–351 (DDCNITGDCNET), 352–363 (DDCDITGDCNET), 364–375 (DDCNITGDCNET), 376–387 (DDCNITGDCNET), 388–399 (DDCNITGDCNET), 400–411 (DDCNITGDCNET), 412–423 (DDCNITGDCNET), 424–435 (DDCDITGDCNET), 436–447 (DDCNITGDCNET), 448–459 (DDCDITGDCNET), 460–471 (DDCNITGDCNET), 472–483 (DDCNITGDCNET), 484–495 (DDCNITGDCNET), 496–507 (DDCNITGDCNET), 508–519 (DDCNITGDCNET), 520–531 (DDCNITGDCNET), 532–543 (DDCDITGDCNET), 544–555 (DDCNITGDCNET), 556–567 (DDCNITGDCNET), 568–579 (DDCNITGDCNET), 580–591 (DDCNITGDCNET), 592–603 (DDCNITGDCNET), 604–615 (DDCDITGDCNET), 616–627 (DDCNITGDCNET), 628–639 (DDCDITGDCNET), 640–651 (DDCNITGDCNET), 652–663 (DDCNITGDCNET), 664–675 (DDCNITGDCNET), 676–687 (DDCNITGDCNET), 688–699 (DDCNITGDCNET), 700–711 (DDCNITGDCNET), 712–723 (DDCDITGDCNET), 724–735 (DDCNITGDCNET), 736–747 (DDCNITGDCNET), 748–759 (DDCNITGDCNET), 760–771 (DDCNITGDCNET), 772–783 (DDCNITGDCNET), 784–795 (DDCDITGDCNET), 796–807 (DDCNITGDCNET), 808–819 (DDCDITGDCNET), and 820–831 (DDCNITGDCNET). Positions 40–831 (DDCNITGDCN…CNITGDCNET (792 aa)) are 66 X 12 AA tandem repeats of D-D-C-[ND]-I-T-G-D-G-N-E-T. N-linked (GlcNAc...) asparagine glycosylation is found at Asn-67, Asn-79, Asn-91, and Asn-103. 3 N-linked (GlcNAc...) asparagine glycosylation sites follow: Asn-127, Asn-139, and Asn-151. The N-linked (GlcNAc...) asparagine glycan is linked to Asn-175. Asn-199, Asn-211, Asn-223, Asn-235, Asn-247, and Asn-259 each carry an N-linked (GlcNAc...) asparagine glycan. Asn-283, Asn-295, Asn-307, Asn-319, Asn-331, and Asn-343 each carry an N-linked (GlcNAc...) asparagine glycan. Residues Asn-367, Asn-379, Asn-391, Asn-403, and Asn-415 are each glycosylated (N-linked (GlcNAc...) asparagine). Asn-439 is a glycosylation site (N-linked (GlcNAc...) asparagine). N-linked (GlcNAc...) asparagine glycosylation is found at Asn-463, Asn-475, Asn-487, Asn-499, Asn-511, and Asn-523. Residues Asn-547, Asn-559, Asn-571, Asn-583, and Asn-595 are each glycosylated (N-linked (GlcNAc...) asparagine). N-linked (GlcNAc...) asparagine glycosylation is present at Asn-619. Residues Asn-643, Asn-655, Asn-667, Asn-679, Asn-691, and Asn-703 are each glycosylated (N-linked (GlcNAc...) asparagine). Asn-727, Asn-739, Asn-751, Asn-763, and Asn-775 each carry an N-linked (GlcNAc...) asparagine glycan. Asn-799 is a glycosylation site (N-linked (GlcNAc...) asparagine). A glycan (N-linked (GlcNAc...) asparagine) is linked at Asn-823. The chain crosses the membrane as a helical span at residues 883–903 (LLLAGSTFLVLAVGLSAVLFL). At 904–945 (GRERQNAVVICDNEVMMEEVPGCLSDASFAVPVTQSSDEARP) the chain is on the cytoplasmic side.

It localises to the flagellar pocket. It is found in the cell membrane. Supposed to function as cell surface receptor. Possibly involved in receptor-mediated endocytosis. This Trypanosoma brucei brucei protein is Cysteine-rich, acidic integral membrane protein (CRAM).